The following is a 466-amino-acid chain: Vimentin (466 aa).

2 stretches are compositionally biased toward low complexity: residues Met1–Arg13 and Thr20–Thr33. Residues Met1 to Thr33 are disordered. Ser2 carries the N-acetylserine modification. The segment at Ser2–Glu95 is head. Ser5 carries the phosphoserine modification. Phosphoserine; by PKA and PKC; alternate is present on Ser7. Ser7 carries an O-linked (GlcNAc) serine; alternate glycan. Ser8 carries the phosphoserine modification. Ser9 and Ser10 each carry phosphoserine; by PKC. Position 20 is a phosphothreonine (Thr20). Ser21 carries the post-translational modification Phosphoserine; by PKC. The residue at position 25 (Ser25) is a Phosphoserine; by PKA and PKC. Ser26 is subject to Phosphoserine; by PKC. An O-linked (GlcNAc) threonine glycan is attached at Thr33. Residue Ser34 is glycosylated (O-linked (GlcNAc) serine; alternate). The residue at position 34 (Ser34) is a Phosphoserine; by PKC; alternate. Ser39 is modified (phosphoserine; by CaMK2, PKA, PKC and ROCK2). Position 42 is a phosphoserine; by PKC (Ser42). A Phosphoserine; by PKA modification is found at Ser47. Ser49 is subject to Phosphoserine. Phosphoserine; by PKA and PKC is present on Ser51. The residue at position 53 (Tyr53) is a Phosphotyrosine. A phosphoserine mark is found at Ser55 and Ser56. A Phosphotyrosine modification is found at Tyr61. Phosphoserine; by PKA and PKC is present on Ser66. Ser72 carries the post-translational modification Phosphoserine; by AURKB and ROCK2. The residue at position 73 (Ser73) is a Phosphoserine. Ser83 is subject to Phosphoserine; by CaMK2. Ser87 is modified (phosphoserine). Residues Phe96–Leu131 are coil 1A. A coiled-coil region spans residues Phe96 to Leu131. The 309-residue stretch at Glu103–Ile411 folds into the IF rod domain. Lys104 is covalently cross-linked (Glycyl lysine isopeptide (Lys-Gly) (interchain with G-Cter in SUMO2)). At Tyr117 the chain carries Phosphotyrosine. Residues Lys120, Lys129, and Lys139 each carry the N6-acetyllysine; alternate modification. N6-succinyllysine; alternate is present on residues Lys120 and Lys129. Residues Lys120, Lys129, and Lys139 each participate in a glycyl lysine isopeptide (Lys-Gly) (interchain with G-Cter in SUMO2); alternate cross-link. Residues Leu132–Glu153 are linker 1. Ser144 is modified (phosphoserine). The stretch at Met154 to Leu245 forms a coiled coil. The interval Met154 to Leu245 is coil 1B. At Lys168 the chain carries N6-acetyllysine. An N6-acetyllysine; alternate modification is found at Lys188. Lys188 is subject to N6-succinyllysine; alternate. Ser214 is modified (phosphoserine). An N6-acetyllysine; alternate modification is found at Lys223. A Glycyl lysine isopeptide (Lys-Gly) (interchain with G-Cter in SUMO2); alternate cross-link involves residue Lys223. Residue Ser226 is modified to Phosphoserine. Lys235 is modified (N6-acetyllysine). The segment at Gln246–Ala268 is linker 12. Lys262 participates in a covalent cross-link: Glycyl lysine isopeptide (Lys-Gly) (interchain with G-Cter in SUMO2). Residues Leu269–Glu407 are coil 2. At Lys294 the chain carries N6-acetyllysine; alternate. Position 294 is an N6-succinyllysine; alternate (Lys294). A Glycyl lysine isopeptide (Lys-Gly) (interchain with G-Cter in SUMO2); alternate cross-link involves residue Lys294. Position 299 is a phosphoserine (Ser299). The stretch at Asn303 to Glu407 forms a coiled coil. Lys313 is covalently cross-linked (Glycyl lysine isopeptide (Lys-Gly) (interchain with G-Cter in SUMO2)). Ser325 carries the phosphoserine modification. The [IL]-x-C-x-x-[DE] motif signature appears at Leu326 to Glu329. Residue Lys373 is modified to N6-acetyllysine; alternate. Lys373 is covalently cross-linked (Glycyl lysine isopeptide (Lys-Gly) (interchain with G-Cter in SUMO2); alternate). A tail region spans residues Glu408–Glu466. 4 positions are modified to phosphoserine: Ser409, Ser412, Ser419, and Ser420. A Phosphothreonine modification is found at Thr426. Phosphoserine is present on Ser430. Thr436 carries the phosphothreonine modification. Ser438 is subject to Phosphoserine. Lys439 is covalently cross-linked (Glycyl lysine isopeptide (Lys-Gly) (interchain with G-Cter in SUMO2)). Position 445 is an N6-acetyllysine; alternate (Lys445). Lys445 bears the N6-succinyllysine; alternate mark. Lys445 participates in a covalent cross-link: Glycyl lysine isopeptide (Lys-Gly) (interchain with G-Cter in SUMO2); alternate. Lys445 participates in a covalent cross-link: Glycyl lysine isopeptide (Lys-Gly) (interchain with G-Cter in SUMO1); alternate. Thr446 and Thr458 each carry phosphothreonine. Residue Ser459 is modified to Phosphoserine.

Belongs to the intermediate filament family. Homomer assembled from elementary dimers. Identified in complexes that contain VIM, EZR, AHNAK, BFSP1, BFSP2, ANK2, PLEC, PRX and spectrin. Interacts with BCAS3. Interacts with LGSN. Interacts with SYNM. Interacts (via rod region) with PLEC (via CH 1 domain). Interacts with PLEC isoform 1C. Interacts with STK33. Interacts with LARP6. Interacts with RAB8B. Interacts with TOR1A; the interaction associates TOR1A with the cytoskeleton. Interacts with TOR1AIP1. Interacts with DIAPH1. Interacts with EPPK1; interaction is dependent of higher-order structure of intermediate filament. Interacts with the non-receptor tyrosine kinase SRMS; the interaction leads to phosphorylation of VIM. Interacts with NOD2. Interacts (via head region) with CORO1C. Interacts with HDGF. Interacts with PRKCE (via phorbol-ester/DAG-type 2 domain). Interacts with BFSP2. Interacts with PPL. Interacts with PKP1 and PKP2. Interacts with SCRIB (via PDZ domains); the interaction protects SCRIB from proteasomal degradation and facilitates SCRIB localization to intermediate filaments, the interaction is reduced by cell contact inhibition. Phosphorylation by PKN1 inhibits the formation of filaments. Filament disassembly during mitosis is promoted by phosphorylation at Ser-55 as well as by nestin. One of the most prominent phosphoproteins in various cells of mesenchymal origin. Phosphorylation is enhanced during cell division, at which time vimentin filaments are significantly reorganized. Phosphorylated at Ser-56 by CDK5 during neutrophil secretion in the cytoplasm. Phosphorylated by STK33. Phosphorylated on tyrosine residues by SRMS. In terms of processing, S-nitrosylation is induced by interferon-gamma and oxidatively-modified low-densitity lipoprotein (LDL(ox)) possibly implicating the iNOS-S100A8/9 transnitrosylase complex. As to expression, detected in eye lens fiber cells (at protein level). Expressed in retinal lens epithelial cells (at protein level). Expressed in Langerhans cells in the epidermis (at protein level).

It is found in the cytoplasm. Its subcellular location is the cytoskeleton. The protein resides in the nucleus matrix. It localises to the cell membrane. Vimentins are class-III intermediate filaments found in various non-epithelial cells, especially mesenchymal cells. Vimentin is attached to the nucleus, endoplasmic reticulum, and mitochondria, either laterally or terminally. Plays a role in cell directional movement, orientation, cell sheet organization and Golgi complex polarization at the cell migration front. Protects SCRIB from proteasomal degradation and facilitates its localization to intermediate filaments in a cell contact-mediated manner. In terms of biological role, involved with LARP6 in the stabilization of type I collagen mRNAs for CO1A1 and CO1A2. This chain is Vimentin, found in Mus musculus (Mouse).